Consider the following 531-residue polypeptide: Zinc finger protein 837 (531 aa).

The disordered stretch occupies residues 1 to 101 (MEAPAQKAGQ…CGPTSSQNPE (101 aa)). Basic and acidic residues predominate over residues 24-50 (AREKRPEEPRPLEEDRAGSRPTQKGDL). C2H2-type zinc fingers lie at residues 271–293 (YACD…QRIH), 299–321 (YECA…QKTH), 363–385 (YECA…RRVH), 391–413 (YACP…QRTH), 419–441 (YACP…QRAH), 447–469 (YGCS…ERLH), 475–497 (YICR…LRTH), and 503–525 (YACG…RKRH).

Belongs to the krueppel C2H2-type zinc-finger protein family.

The protein resides in the nucleus. May be involved in transcriptional regulation. The chain is Zinc finger protein 837 (ZNF837) from Homo sapiens (Human).